A 260-amino-acid chain; its full sequence is OCIA domain-containing protein 1 (260 aa).

The 110-residue stretch at Met-1–Glu-110 folds into the OCIA domain. A disordered region spans residues Asp-146 to Asp-260. Positions Pro-155 to Asp-164 are enriched in polar residues. Residues Glu-205 to Tyr-215 show a composition bias toward basic and acidic residues.

The protein belongs to the OCIAD1 family.

This is OCIA domain-containing protein 1 from Drosophila pseudoobscura pseudoobscura (Fruit fly).